The sequence spans 839 residues: Heat shock 70 kDa protein 4L (839 aa).

Phosphoserine is present on residues S74 and S508. Over residues 503–554 (LEGDHSDAPMETETSFKNENKDNMDKMQVDQEEGHQKCHAEHTPEEEIDHTG) the composition is skewed to basic and acidic residues. Residues 503–567 (LEGDHSDAPM…KSAVSDKQDR (65 aa)) form a disordered region. Phosphothreonine is present on T545. S579 carries the post-translational modification Phosphoserine. The residue at position 761 (T761) is a Phosphothreonine. The segment at 786 to 839 (IYKPKPKAEVPEDKPKANSEHNGPMDGQSGTETKSDSTKDSSQHTKSSGEMEVD) is disordered. Basic and acidic residues-rich tracts occupy residues 791 to 804 (PKAE…KANS) and 818 to 839 (TKSD…MEVD).

It belongs to the heat shock protein 70 family. As to quaternary structure, homodimer.

The protein localises to the cytoplasm. The protein resides in the nucleus. In terms of biological role, possesses chaperone activity in vitro where it inhibits aggregation of citrate synthase. This Homo sapiens (Human) protein is Heat shock 70 kDa protein 4L (HSPA4L).